The sequence spans 388 residues: MNLHEYQAKQLFARYGLPAPTGYACNTLREAEESASKIGAGPWVVKCQVHAGGRGKSGGVKVVKLKEEIRAFAEQWLGKRLVTYQTDALGQPVNQILVEVATDIAKELYLGVVVDRGTRRVVFMASTEGGVEIEKVAEETPHLIHKVALDPLTGPQPYQGRELAFKLGLSGKQVSQFSKIFMGLATLFLERDLALVEINPLVITGAGDLICLDGKLSADGNALFRQPELREMRDHSQEDEREAHATQLELNYVALDGNIGCMVNGAGLAMGTMDIVKLHGGEPANFLDVGGGATKERVTEAFKIILSDEKVKAVLVNIFGGIVRCDLIADGIIGAVSEVGVSVPVVVRLEGNNAELGAKRLADSGLNIIAATSLTDAAQQVVAAVEGK.

Residues 9–244 (KQLFARYGLP…HSQEDEREAH (236 aa)) enclose the ATP-grasp domain. ATP is bound by residues K46, 53-55 (GRG), E99, T102, and E107. 2 residues coordinate Mg(2+): N199 and D213. Substrate-binding positions include N264 and 321–323 (GIV).

Belongs to the succinate/malate CoA ligase beta subunit family. As to quaternary structure, heterotetramer of two alpha and two beta subunits. Mg(2+) is required as a cofactor.

The catalysed reaction is succinate + ATP + CoA = succinyl-CoA + ADP + phosphate. It carries out the reaction GTP + succinate + CoA = succinyl-CoA + GDP + phosphate. It functions in the pathway carbohydrate metabolism; tricarboxylic acid cycle; succinate from succinyl-CoA (ligase route): step 1/1. In terms of biological role, succinyl-CoA synthetase functions in the citric acid cycle (TCA), coupling the hydrolysis of succinyl-CoA to the synthesis of either ATP or GTP and thus represents the only step of substrate-level phosphorylation in the TCA. The beta subunit provides nucleotide specificity of the enzyme and binds the substrate succinate, while the binding sites for coenzyme A and phosphate are found in the alpha subunit. The sequence is that of Succinate--CoA ligase [ADP-forming] subunit beta from Sodalis glossinidius (strain morsitans).